A 317-amino-acid chain; its full sequence is Small ribosomal subunit biogenesis GTPase RsgA (317 aa).

Residues 88-249 (DQYKSKLFAA…LIDSPGFQEF (162 aa)) enclose the CP-type G domain. GTP is bound by residues 136–139 (NKID) and 190–198 (GQSGMGKST). Positions 273, 278, 280, and 286 each coordinate Zn(2+).

It belongs to the TRAFAC class YlqF/YawG GTPase family. RsgA subfamily. In terms of assembly, monomer. Associates with 30S ribosomal subunit, binds 16S rRNA. Requires Zn(2+) as cofactor.

The protein localises to the cytoplasm. One of several proteins that assist in the late maturation steps of the functional core of the 30S ribosomal subunit. Helps release RbfA from mature subunits. May play a role in the assembly of ribosomal proteins into the subunit. Circularly permuted GTPase that catalyzes slow GTP hydrolysis, GTPase activity is stimulated by the 30S ribosomal subunit. This chain is Small ribosomal subunit biogenesis GTPase RsgA, found in Paraburkholderia phymatum (strain DSM 17167 / CIP 108236 / LMG 21445 / STM815) (Burkholderia phymatum).